Reading from the N-terminus, the 135-residue chain is Protein Wnt-7b (135 aa).

2 disulfides stabilise this stretch: cysteine 3–cysteine 17 and cysteine 5–cysteine 12. The O-palmitoleoyl serine; by PORCN moiety is linked to residue serine 9. Residues 41–69 (VEVVRANRLRQPTFLKIKKVRSYQKPMET) are disordered linker. 3 disulfide bridges follow: cysteine 81–cysteine 112, cysteine 97–cysteine 107, and cysteine 134–cysteine 135. Asparagine 98 carries an N-linked (GlcNAc...) asparagine glycan.

It belongs to the Wnt family. Post-translationally, palmitoleoylation is required for efficient binding to frizzled receptors. Depalmitoleoylation leads to Wnt signaling pathway inhibition. In adults, in brain and lung.

It localises to the secreted. Its subcellular location is the extracellular space. The protein resides in the extracellular matrix. Ligand for members of the frizzled family of seven transmembrane receptors that functions in the canonical Wnt/beta-catenin signaling pathway. Required for normal fusion of the chorion and the allantois during placenta development. Required for central nervous system (CNS) angiogenesis and blood-brain barrier regulation. The polypeptide is Protein Wnt-7b (wnt7b) (Xenopus laevis (African clawed frog)).